The following is a 171-amino-acid chain: Putative metal-dependent hydrolase BH0277 (171 aa).

3 residues coordinate Zn(2+): H64, H155, and H159.

Belongs to the metal hydrolase YfiT family. As to quaternary structure, homodimer. Zn(2+) is required as a cofactor.

It localises to the cytoplasm. In terms of biological role, possible metal-dependent hydrolase. This Halalkalibacterium halodurans (strain ATCC BAA-125 / DSM 18197 / FERM 7344 / JCM 9153 / C-125) (Bacillus halodurans) protein is Putative metal-dependent hydrolase BH0277.